The following is a 466-amino-acid chain: Citrate synthase, mitochondrial (466 aa).

A mitochondrion-targeting transit peptide spans 1 to 27; that stretch reads MALLTAAARLLGAKNSSCLVLAARHAS. The short motif at 2–21 is the SIFI-degron element; that stretch reads ALLTAAARLLGAKNSSCLVL. Lysine 57 carries the post-translational modification N6-succinyllysine. Position 76 is an N6-acetyllysine; alternate (lysine 76). The residue at position 76 (lysine 76) is an N6-succinyllysine; alternate. N6-succinyllysine is present on residues lysine 103 and lysine 193. Serine 226 carries the phosphoserine modification. Histidine 301 is an active-site residue. 2 positions are modified to N6-acetyllysine; alternate: lysine 321 and lysine 327. N6-succinyllysine; alternate is present on residues lysine 321 and lysine 327. Residue histidine 347 is part of the active site. Residue arginine 356 coordinates oxaloacetate. Lysine 375 bears the N6-acetyllysine; alternate mark. Residue lysine 375 is modified to N6-succinyllysine; alternate. Lysine 382 carries the N6-acetyllysine modification. Lysine 393 bears the N6-acetyllysine; alternate mark. Lysine 393 carries the N6-succinyllysine; alternate modification. Lysine 395 is modified (N6,N6,N6-trimethyllysine). Aspartate 402 is a catalytic residue. Oxaloacetate contacts are provided by arginine 428 and arginine 448. Lysine 450 is modified (N6-succinyllysine). N6-acetyllysine; alternate is present on lysine 459. Lysine 459 is subject to N6-succinyllysine; alternate.

Belongs to the citrate synthase family. In terms of assembly, homodimer. In terms of processing, methylated. Trimethylation at Lys-395 by CSKMT decreases citrate synthase activity. Post-translationally, in response to mitochondrial stress, the precursor protein is ubiquitinated by the SIFI complex in the cytoplasm before mitochondrial import, leading to its degradation. Within the SIFI complex, UBR4 initiates ubiquitin chain that are further elongated or branched by KCMF1. As to expression, expressed in the head region and flagellum of epididymal sperm.

The protein localises to the mitochondrion matrix. The catalysed reaction is oxaloacetate + acetyl-CoA + H2O = citrate + CoA + H(+). The protein operates within carbohydrate metabolism; tricarboxylic acid cycle; isocitrate from oxaloacetate: step 1/2. Its function is as follows. Key enzyme of the Krebs tricarboxylic acid cycle which catalyzes the synthesis of citrate from acetyl coenzyme A and oxaloacetate. The protein is Citrate synthase, mitochondrial (Cs) of Rattus norvegicus (Rat).